Reading from the N-terminus, the 237-residue chain is Ubiquitin-conjugating enzyme E2 34 (237 aa).

Residues 5 to 162 (ACIKRLQKEY…FPEYVEKYNQ (158 aa)) enclose the UBC core domain. Residue cysteine 87 is the Glycyl thioester intermediate of the active site. Residues 168 to 207 (QATTQLTTPESPQKSDTKVESEKTIDPTKGDSEGGLKERK) are disordered. Basic and acidic residues predominate over residues 180 to 204 (QKSDTKVESEKTIDPTKGDSEGGLK). A helical membrane pass occupies residues 214–234 (LPAWIILLLVSVFGVVMALPL).

Belongs to the ubiquitin-conjugating enzyme family.

Its subcellular location is the membrane. It carries out the reaction S-ubiquitinyl-[E1 ubiquitin-activating enzyme]-L-cysteine + [E2 ubiquitin-conjugating enzyme]-L-cysteine = [E1 ubiquitin-activating enzyme]-L-cysteine + S-ubiquitinyl-[E2 ubiquitin-conjugating enzyme]-L-cysteine.. The protein operates within protein modification; protein ubiquitination. Functionally, accepts the ubiquitin from the E1 complex and catalyzes its covalent attachment to other proteins. In Arabidopsis thaliana (Mouse-ear cress), this protein is Ubiquitin-conjugating enzyme E2 34 (UBC34).